Reading from the N-terminus, the 85-residue chain is MDISRAEQRILHLLAQGGRIDLVRDEAGKLTDAHCYSRDGWRYTGLDMALFRKLKRRRTIASERGQPYRITRRGLQLVRSQPDNC.

Belongs to the UPF0386 family.

This chain is UPF0386 protein HNE_3437, found in Hyphomonas neptunium (strain ATCC 15444).